Here is a 209-residue protein sequence, read N- to C-terminus: Dual specificity protein phosphatase 22 (209 aa).

One can recognise a Tyrosine-protein phosphatase domain in the interval Gly4–His144. Cys88 serves as the catalytic Phosphocysteine intermediate. Residues Leu169–Ser192 are disordered. Polar residues predominate over residues Ala177 to Trp190.

This sequence belongs to the protein-tyrosine phosphatase family. Non-receptor class dual specificity subfamily.

The protein localises to the cytoplasm. It localises to the nucleus. The enzyme catalyses O-phospho-L-tyrosyl-[protein] + H2O = L-tyrosyl-[protein] + phosphate. It catalyses the reaction O-phospho-L-seryl-[protein] + H2O = L-seryl-[protein] + phosphate. The catalysed reaction is O-phospho-L-threonyl-[protein] + H2O = L-threonyl-[protein] + phosphate. Activates the Jnk signaling pathway. Dephosphorylates and deactivates p38 and stress-activated protein kinase/c-Jun N-terminal kinase (SAPK/JNK). The chain is Dual specificity protein phosphatase 22 (dusp22) from Xenopus laevis (African clawed frog).